Consider the following 187-residue polypeptide: Ribosome-recycling factor (187 aa).

It belongs to the RRF family.

It localises to the cytoplasm. In terms of biological role, responsible for the release of ribosomes from messenger RNA at the termination of protein biosynthesis. May increase the efficiency of translation by recycling ribosomes from one round of translation to another. The sequence is that of Ribosome-recycling factor from Rhodopseudomonas palustris (strain BisB18).